Reading from the N-terminus, the 616-residue chain is Dihydroxy-acid dehydratase (616 aa).

Residue Asp81 coordinates Mg(2+). A [2Fe-2S] cluster-binding site is contributed by Cys122. Mg(2+) contacts are provided by Asp123 and Lys124. Lys124 is modified (N6-carboxylysine). Cys195 contacts [2Fe-2S] cluster. A Mg(2+)-binding site is contributed by Glu491. Residue Ser517 is the Proton acceptor of the active site.

Belongs to the IlvD/Edd family. Homodimer. The cofactor is [2Fe-2S] cluster. Requires Mg(2+) as cofactor.

The enzyme catalyses (2R)-2,3-dihydroxy-3-methylbutanoate = 3-methyl-2-oxobutanoate + H2O. It catalyses the reaction (2R,3R)-2,3-dihydroxy-3-methylpentanoate = (S)-3-methyl-2-oxopentanoate + H2O. The protein operates within amino-acid biosynthesis; L-isoleucine biosynthesis; L-isoleucine from 2-oxobutanoate: step 3/4. Its pathway is amino-acid biosynthesis; L-valine biosynthesis; L-valine from pyruvate: step 3/4. In terms of biological role, functions in the biosynthesis of branched-chain amino acids. Catalyzes the dehydration of (2R,3R)-2,3-dihydroxy-3-methylpentanoate (2,3-dihydroxy-3-methylvalerate) into 2-oxo-3-methylpentanoate (2-oxo-3-methylvalerate) and of (2R)-2,3-dihydroxy-3-methylbutanoate (2,3-dihydroxyisovalerate) into 2-oxo-3-methylbutanoate (2-oxoisovalerate), the penultimate precursor to L-isoleucine and L-valine, respectively. The chain is Dihydroxy-acid dehydratase from Salmonella dublin (strain CT_02021853).